We begin with the raw amino-acid sequence, 449 residues long: Tubulin alpha chain (449 aa).

GTP contacts are provided by Gln-11, Glu-71, Ser-140, Gly-144, Thr-145, Thr-179, Asn-206, and Asn-228. Glu-71 contacts Mg(2+). The active site involves Glu-254.

The protein belongs to the tubulin family. In terms of assembly, dimer of alpha and beta chains. A typical microtubule is a hollow water-filled tube with an outer diameter of 25 nm and an inner diameter of 15 nM. Alpha-beta heterodimers associate head-to-tail to form protofilaments running lengthwise along the microtubule wall with the beta-tubulin subunit facing the microtubule plus end conferring a structural polarity. Microtubules usually have 13 protofilaments but different protofilament numbers can be found in some organisms and specialized cells. It depends on Mg(2+) as a cofactor.

The protein resides in the cytoplasm. It is found in the cytoskeleton. The enzyme catalyses GTP + H2O = GDP + phosphate + H(+). Its function is as follows. Tubulin is the major constituent of microtubules, a cylinder consisting of laterally associated linear protofilaments composed of alpha- and beta-tubulin heterodimers. Microtubules grow by the addition of GTP-tubulin dimers to the microtubule end, where a stabilizing cap forms. Below the cap, tubulin dimers are in GDP-bound state, owing to GTPase activity of alpha-tubulin. This is Tubulin alpha chain (TUB1) from Gibberella zeae (strain ATCC MYA-4620 / CBS 123657 / FGSC 9075 / NRRL 31084 / PH-1) (Wheat head blight fungus).